Here is a 219-residue protein sequence, read N- to C-terminus: Clathrin light chain (219 aa).

The disordered stretch occupies residues 32–136 (AEITGGSASA…KKEELRQQSK (105 aa)). An involved in binding clathrin heavy chain region spans residues 96–158 (PPPSREEPEK…SISKTKLASR (63 aa)). Over residues 99-136 (SREEPEKIRKWREEQKQRLEEKDIEEERKKEELRQQSK) the composition is skewed to basic and acidic residues.

The protein belongs to the clathrin light chain family. As to quaternary structure, clathrin coats are formed from molecules containing 3 heavy chains and 3 light chains.

Its subcellular location is the cytoplasmic vesicle membrane. The protein resides in the membrane. It localises to the coated pit. Functionally, clathrin is the major protein of the polyhedral coat of coated pits and vesicles. The protein is Clathrin light chain (Clc) of Drosophila melanogaster (Fruit fly).